The chain runs to 957 residues: Glycine dehydrogenase (decarboxylating) (957 aa).

The residue at position 708 (K708) is an N6-(pyridoxal phosphate)lysine.

Belongs to the GcvP family. As to quaternary structure, the glycine cleavage system is composed of four proteins: P, T, L and H. Pyridoxal 5'-phosphate serves as cofactor.

It carries out the reaction N(6)-[(R)-lipoyl]-L-lysyl-[glycine-cleavage complex H protein] + glycine + H(+) = N(6)-[(R)-S(8)-aminomethyldihydrolipoyl]-L-lysyl-[glycine-cleavage complex H protein] + CO2. In terms of biological role, the glycine cleavage system catalyzes the degradation of glycine. The P protein binds the alpha-amino group of glycine through its pyridoxal phosphate cofactor; CO(2) is released and the remaining methylamine moiety is then transferred to the lipoamide cofactor of the H protein. The chain is Glycine dehydrogenase (decarboxylating) from Shigella dysenteriae serotype 1 (strain Sd197).